We begin with the raw amino-acid sequence, 280 residues long: Phosphonates import ATP-binding protein PhnC 1 (280 aa).

Residues 3–247 (FRLDAASVSY…LLRELYASES (245 aa)) form the ABC transporter domain. 36–43 (GPSGAGKT) contributes to the ATP binding site.

This sequence belongs to the ABC transporter superfamily. Phosphonates importer (TC 3.A.1.9.1) family. As to quaternary structure, the complex is composed of two ATP-binding proteins (PhnC), two transmembrane proteins (PhnE) and a solute-binding protein (PhnD).

The protein localises to the cell inner membrane. The enzyme catalyses phosphonate(out) + ATP + H2O = phosphonate(in) + ADP + phosphate + H(+). Functionally, part of the ABC transporter complex PhnCDE involved in phosphonates import. Responsible for energy coupling to the transport system. The chain is Phosphonates import ATP-binding protein PhnC 1 from Cupriavidus necator (strain ATCC 17699 / DSM 428 / KCTC 22496 / NCIMB 10442 / H16 / Stanier 337) (Ralstonia eutropha).